We begin with the raw amino-acid sequence, 615 residues long: UvrABC system protein C (615 aa).

The GIY-YIG domain maps to 14–91; sequence TSPGCYIHKD…IKENKPKYNI (78 aa). Residues 196–231 enclose the UVR domain; it reads NKIIDELKGKMAAAAQTMEFERAAEYRDLIQAIGTL.

The protein belongs to the UvrC family. Interacts with UvrB in an incision complex.

The protein localises to the cytoplasm. Functionally, the UvrABC repair system catalyzes the recognition and processing of DNA lesions. UvrC both incises the 5' and 3' sides of the lesion. The N-terminal half is responsible for the 3' incision and the C-terminal half is responsible for the 5' incision. This chain is UvrABC system protein C, found in Streptococcus pneumoniae (strain ATCC 700669 / Spain 23F-1).